A 477-amino-acid polypeptide reads, in one-letter code: Ribulose bisphosphate carboxylase large chain (477 aa).

Residues 1–2 (MS) constitute a propeptide that is removed on maturation. N-acetylproline is present on P3. K14 is modified (N6,N6,N6-trimethyllysine). 2 residues coordinate substrate: N123 and T173. K175 serves as the catalytic Proton acceptor. Residue K177 participates in substrate binding. Positions 201, 203, and 204 each coordinate Mg(2+). The residue at position 201 (K201) is an N6-carboxylysine. H294 functions as the Proton acceptor in the catalytic mechanism. Substrate is bound by residues R295, H327, and S379.

The protein belongs to the RuBisCO large chain family. Type I subfamily. As to quaternary structure, heterohexadecamer of 8 large chains and 8 small chains; disulfide-linked. The disulfide link is formed within the large subunit homodimers. Mg(2+) is required as a cofactor. In terms of processing, the disulfide bond which can form in the large chain dimeric partners within the hexadecamer appears to be associated with oxidative stress and protein turnover.

Its subcellular location is the plastid. The protein resides in the chloroplast. The catalysed reaction is 2 (2R)-3-phosphoglycerate + 2 H(+) = D-ribulose 1,5-bisphosphate + CO2 + H2O. The enzyme catalyses D-ribulose 1,5-bisphosphate + O2 = 2-phosphoglycolate + (2R)-3-phosphoglycerate + 2 H(+). Its function is as follows. RuBisCO catalyzes two reactions: the carboxylation of D-ribulose 1,5-bisphosphate, the primary event in carbon dioxide fixation, as well as the oxidative fragmentation of the pentose substrate in the photorespiration process. Both reactions occur simultaneously and in competition at the same active site. The protein is Ribulose bisphosphate carboxylase large chain of Atropa belladonna (Belladonna).